The chain runs to 685 residues: Polyphosphate kinase (685 aa).

Asn-45 serves as a coordination point for ATP. Mg(2+) contacts are provided by Arg-375 and Arg-405. His-435 (phosphohistidine intermediate) is an active-site residue. 3 residues coordinate ATP: Tyr-468, Arg-564, and His-592.

This sequence belongs to the polyphosphate kinase 1 (PPK1) family. Mg(2+) is required as a cofactor. Post-translationally, an intermediate of this reaction is the autophosphorylated ppk in which a phosphate is covalently linked to a histidine residue through a N-P bond.

The catalysed reaction is [phosphate](n) + ATP = [phosphate](n+1) + ADP. Its function is as follows. Catalyzes the reversible transfer of the terminal phosphate of ATP to form a long-chain polyphosphate (polyP). This is Polyphosphate kinase from Neisseria meningitidis serogroup A / serotype 4A (strain DSM 15465 / Z2491).